The chain runs to 587 residues: Ran GTPase-activating protein 1 (587 aa).

Ala2 carries the N-acetylalanine modification. Residue Lys8 forms a Glycyl lysine isopeptide (Lys-Gly) (interchain with G-Cter in SUMO1); alternate linkage. Residue Lys8 forms a Glycyl lysine isopeptide (Lys-Gly) (interchain with G-Cter in SUMO2); alternate linkage. Lys15 participates in a covalent cross-link: Glycyl lysine isopeptide (Lys-Gly) (interchain with G-Cter in SUMO2). Position 24 is a phosphoserine (Ser24). LRR repeat units lie at residues 48–71 (FDSL…VIAK), 111–134 (GAQL…GFEA), 207–230 (IGTL…ALAQ), and 235–258 (NPLL…AMAE). Residue Lys279 forms a Glycyl lysine isopeptide (Lys-Gly) (interchain with G-Cter in SUMO2) linkage. LRR repeat units lie at residues 292–319 (LPKL…AMAD) and 320–343 (KAEL…QLQE). Residue Ser301 is modified to Phosphoserine. The segment at 357–430 (LSDDEDEEEE…EPAPVLSSPP (74 aa)) is disordered. Ser358 is modified (phosphoserine). Residues 358 to 397 (SDDEDEEEEEEGEEEEEEAEEEEEEDEEEEEEEEEEEEEE) show a composition bias toward acidic residues. Over residues 400-410 (QRGQGEKSATP) the composition is skewed to polar residues. Thr409 carries the phosphothreonine; by CDK2 modification. 2 positions are modified to phosphoserine: Ser428 and Ser435. Phosphothreonine is present on Thr436. Phosphoserine is present on Ser442. Lys452 is covalently cross-linked (Glycyl lysine isopeptide (Lys-Gly) (interchain with G-Cter in SUMO2)). The SUMO conjugation signature appears at 523–526 (LKSE). A Glycyl lysine isopeptide (Lys-Gly) (interchain with G-Cter in SUMO1); alternate cross-link involves residue Lys524. Residue Lys524 forms a Glycyl lysine isopeptide (Lys-Gly) (interchain with G-Cter in SUMO2); alternate linkage. Position 524 is an N6-acetyllysine; alternate (Lys524). Lys586 participates in a covalent cross-link: Glycyl lysine isopeptide (Lys-Gly) (interchain with G-Cter in SUMO2).

It belongs to the RNA1 family. Homodimer. Interacts with RAN. Forms a complex with RANBP2/NUP358, NXF1 and NXT1. Forms a tight complex in association with RANBP2/NUP358 and UBE2I/UBC9, the ubiquitin-conjugating enzyme E2. Interacts with UBE2I; the interaction conjugates SUMO1 to RANGAP1, and subsequently stabilizes interactions of sumoylated RANGAP1 with RANBP2/NUP358. The complex composed of RANBP2, SUMO1, RANGAP1 and UBE2I associates with nuclear pore complexes. Identified in a complex composed of RAN, RANBP2, sumoylated RANGAP1, UBE2I and XPO1. Identified in a complex composed of RAN, RANGAP1 and RANBP1. Interacts with TRAF6. Interacts with SUMO1 and SENP1. Interacts (when sumoylated) with MYCBP2; interaction inhibits MYCBP2 E3 ubiquitin-protein ligase activity and promotes MYCBP2 translocation to the nucleus. Post-translationally, phosphorylation occurs before nuclear envelope breakdown and continues throughout mitosis. Phosphorylated by the M-phase kinase cyclin B/Cdk1, in vitro. Differential timimg of dephosphorylation occurs during phases of mitosis. The phosphorylated form remains associated with RANBP2/NUP358 and the SUMO E2-conjugating enzyme, UBE2I, on nuclear pore complex (NPC) diassembly and during mitosis. In terms of processing, sumoylated. Sumoylation is necessary for targeting to the nuclear envelope (NE), and for association with mitotic spindles and kinetochores during mitosis. Also required for interaction with RANBP2 and is mediated by UBE2I. Desumoylated by HINT1. In terms of tissue distribution, highly expressed in brain, thymus and testis.

It localises to the cytoplasm. Its subcellular location is the nucleus. The protein resides in the nucleoplasm. The protein localises to the nucleus envelope. It is found in the chromosome. It localises to the centromere. Its subcellular location is the kinetochore. The protein resides in the cytoskeleton. The protein localises to the spindle. Functionally, GTPase activator for RAN. Converts cytoplasmic GTP-bound RAN to GDP-bound RAN, which is essential for RAN-mediated nuclear import and export. Mediates dissociation of cargo from nuclear export complexes containing XPO1, RAN and RANBP2 after nuclear export. In Homo sapiens (Human), this protein is Ran GTPase-activating protein 1 (RANGAP1).